Reading from the N-terminus, the 258-residue chain is Tryptophan synthase alpha chain (258 aa).

Residues Glu47 and Asp58 each act as proton acceptor in the active site.

This sequence belongs to the TrpA family. Tetramer of two alpha and two beta chains.

The catalysed reaction is (1S,2R)-1-C-(indol-3-yl)glycerol 3-phosphate + L-serine = D-glyceraldehyde 3-phosphate + L-tryptophan + H2O. It participates in amino-acid biosynthesis; L-tryptophan biosynthesis; L-tryptophan from chorismate: step 5/5. Functionally, the alpha subunit is responsible for the aldol cleavage of indoleglycerol phosphate to indole and glyceraldehyde 3-phosphate. The protein is Tryptophan synthase alpha chain of Bacillus mycoides (strain KBAB4) (Bacillus weihenstephanensis).